The following is a 734-amino-acid chain: Protein arginine N-methyltransferase 5 (734 aa).

Positions 1 to 16 are enriched in polar residues; sequence MSNRTYADNLFPQQVA. Residues 1 to 39 form a disordered region; it reads MSNRTYADNLFPQQVAEQHEEQMSSGSSPKSNSPSRSIS. The segment covering 24–39 has biased composition (low complexity); it reads SSGSSPKSNSPSRSIS. The tract at residues 42 to 329 is TIM barrel; that stretch reads EAANSRIHIG…EYSQALRHAV (288 aa). In terms of domain architecture, SAM-dependent MTase PRMT-type spans 360 to 706; it reads LQAPLQPLSE…VDNTGVWYEW (347 aa). Position 376 (Y376) interacts with S-adenosyl-L-methionine. F379 is a binding site for a protein. S-adenosyl-L-methionine-binding positions include 385-386, E450, and 477-478; these read KY and DM. E499 and E508 together coordinate a protein. Catalysis depends on proton donor/acceptor residues E499 and E508. Positions 529–734 are beta barrel; the sequence is PQKYTSYVKP…PNGESYYMRM (206 aa). Positions 541-589 are dimerization; the sequence is STHIHQTIKAQSIPYLSRAIPSHGRGEPELDEDEMWIQKYPQGHVRNNM.

The protein belongs to the class I-like SAM-binding methyltransferase superfamily. Protein arginine N-methyltransferase family. As to quaternary structure, homodimer. Interacts with cep-1 (via C-terminus domain); does not methylate cep-1. Interacts with cbp-1 (via N-terminus domain and HAT domain); the interaction results in methylation of cbp-1. Component of a complex that contains cep-1 and cbp-1. May interact with pid-2, pid-4 and pid-5.

The protein localises to the nucleus. The catalysed reaction is L-arginyl-[protein] + 2 S-adenosyl-L-methionine = N(omega),N(omega)'-dimethyl-L-arginyl-[protein] + 2 S-adenosyl-L-homocysteine + 2 H(+). Catalyzes the symmetrical dimethylation of arginine residues in targets such as small nuclear ribonucleoproteins, histone H2A/H4 and cbp-1. Dimethylation occurs in a distributive manner where the protein is released after the addition of the first methyl group prior to rebinding for the addition of the second methyl group. Plays a role in the negative regulation of DNA damage-induced apoptosis. By methylating cbp-1, may prevent apoptosis by repressing the capacity of cbp-1 to enhance cep-1 dependent transcription activation of the programmed cell death activator egl-1. Plays a role in heat and oxidative stress resistance. The sequence is that of Protein arginine N-methyltransferase 5 from Caenorhabditis elegans.